We begin with the raw amino-acid sequence, 285 residues long: 4-diphosphocytidyl-2-C-methyl-D-erythritol kinase (285 aa).

K10 is a catalytic residue. 93–103 provides a ligand contact to ATP; the sequence is PIGGGLGGGSS. Residue D135 is part of the active site.

It belongs to the GHMP kinase family. IspE subfamily.

It catalyses the reaction 4-CDP-2-C-methyl-D-erythritol + ATP = 4-CDP-2-C-methyl-D-erythritol 2-phosphate + ADP + H(+). Its pathway is isoprenoid biosynthesis; isopentenyl diphosphate biosynthesis via DXP pathway; isopentenyl diphosphate from 1-deoxy-D-xylulose 5-phosphate: step 3/6. Its function is as follows. Catalyzes the phosphorylation of the position 2 hydroxy group of 4-diphosphocytidyl-2C-methyl-D-erythritol. The chain is 4-diphosphocytidyl-2-C-methyl-D-erythritol kinase from Vesicomyosocius okutanii subsp. Calyptogena okutanii (strain HA).